The primary structure comprises 115 residues: Large ribosomal subunit protein bL19 (115 aa).

The protein belongs to the bacterial ribosomal protein bL19 family.

Functionally, this protein is located at the 30S-50S ribosomal subunit interface and may play a role in the structure and function of the aminoacyl-tRNA binding site. This Streptococcus equi subsp. equi (strain 4047) protein is Large ribosomal subunit protein bL19.